Consider the following 631-residue polypeptide: ATP-dependent RNA helicase mrh4, mitochondrial (631 aa).

A mitochondrion-targeting transit peptide spans 1 to 45 (MNRLGRLPLPLPPSVCLFCRFRATASLPSSLQATRSMATARLRRR). The interval 68–112 (KERFGPFAGMNQTEARIRETPRARSRAAQKRSGEPEEDSQKESPL) is disordered. Residues 98-108 (RSGEPEEDSQK) show a composition bias toward basic and acidic residues. The short motif at 141–174 (TSFDQFQLLPVVRNSISSQALPGLVDVTPTPIQR) is the Q motif element. The segment covering 180-193 (LLEEPKTEKKPTKA) has biased composition (basic and acidic residues). The interval 180–199 (LLEEPKTEKKPTKADDDEPR) is disordered. One can recognise a Helicase ATP-binding domain in the interval 194–406 (DDDEPRYDQY…RKRYPDIKRL (213 aa)). 207-214 (AETGSGKT) is an ATP binding site. Positions 229 to 249 (EARDKELEKKEQEEKAREREE) are disordered. A DEAD box motif is present at residues 353–356 (DEAD). In terms of domain architecture, Helicase C-terminal spans 455 to 631 (GPYASYVAPK…EGMFRGQALI (177 aa)).

The protein belongs to the DEAD box helicase family. MRH4 subfamily.

It localises to the mitochondrion. The catalysed reaction is ATP + H2O = ADP + phosphate + H(+). ATP-binding RNA helicase involved in mitochondrial RNA metabolism. Required for maintenance of mitochondrial DNA. The protein is ATP-dependent RNA helicase mrh4, mitochondrial (mrh4) of Aspergillus fumigatus (strain ATCC MYA-4609 / CBS 101355 / FGSC A1100 / Af293) (Neosartorya fumigata).